Reading from the N-terminus, the 585-residue chain is Cysteine/serine-rich nuclear protein 3 (585 aa).

Disordered stretches follow at residues 1–52 and 335–395; these read MSGI…TPSS and ELDC…GFVE. Residues 30–40 are compositionally biased toward low complexity; the sequence is SSESADSGDSV. The segment covering 41–52 has biased composition (polar residues); sequence NPSTSSHFTPSS. Residues 335–349 are compositionally biased toward acidic residues; that stretch reads ELDCQGEEEEEEEDG. The segment covering 351 to 366 has biased composition (polar residues); sequence SFCSGVTDSSTQSLAP. A compositionally biased stretch (acidic residues) spans 368 to 389; the sequence is ESDEEEEEEEEEEEEEDDDDDK.

This sequence belongs to the AXUD1 family.

Its subcellular location is the nucleus. Binds to the consensus sequence 5'-AGAGTG-3' and has transcriptional activator activity. Plays a role in apoptosis. This chain is Cysteine/serine-rich nuclear protein 3 (CSRNP3), found in Homo sapiens (Human).